Here is a 154-residue protein sequence, read N- to C-terminus: Fucose mutarotase (154 aa).

His24 serves as the catalytic Proton donor. Asp32 is a binding site for substrate. Asp69 is a catalytic residue. Substrate contacts are provided by Met79, Tyr120, Tyr138, and Asn140. Tyr120 is an active-site residue.

It belongs to the RbsD / FucU family. As to quaternary structure, mainly homodimer, but also exists as homotetramer, homooctamer, and homodecamer. The homodimeric form seems catalytically inactive.

The enzyme catalyses alpha-L-fucose = beta-L-fucose. Its pathway is carbohydrate metabolism; L-fucose metabolism. In terms of biological role, involved in the interconversion between alpha- and beta-L-fucoses. L-Fucose (6-deoxy-L-galactose) exists as alpha-L-fucose (29.5%) and beta-L-fucose (70.5%), the beta-form is metabolized through the salvage pathway. GDP-L-fucose formed either by the de novo or salvage pathways is transported into the endoplasmic reticulum, where it serves as a substrate for N- and O-glycosylations by fucosyltransferases. Fucosylated structures expressed on cell surfaces or secreted in biological fluids are believed to play a critical role in cell-cell adhesion and recognition processes. This Homo sapiens (Human) protein is Fucose mutarotase (FUOM).